We begin with the raw amino-acid sequence, 156 residues long: Ribosomal RNA large subunit methyltransferase H (156 aa).

Residues Leu-73, Gly-104, and 123–128 (ISSMTL) each bind S-adenosyl-L-methionine.

It belongs to the RNA methyltransferase RlmH family. Homodimer.

Its subcellular location is the cytoplasm. It catalyses the reaction pseudouridine(1915) in 23S rRNA + S-adenosyl-L-methionine = N(3)-methylpseudouridine(1915) in 23S rRNA + S-adenosyl-L-homocysteine + H(+). Its function is as follows. Specifically methylates the pseudouridine at position 1915 (m3Psi1915) in 23S rRNA. This is Ribosomal RNA large subunit methyltransferase H from Burkholderia vietnamiensis (strain G4 / LMG 22486) (Burkholderia cepacia (strain R1808)).